Here is a 223-residue protein sequence, read N- to C-terminus: RNA-free ribonuclease P (223 aa).

The protein belongs to the HARP family.

It catalyses the reaction Endonucleolytic cleavage of RNA, removing 5'-extranucleotides from tRNA precursor.. Functionally, RNA-free RNase P that catalyzes the removal of the 5'-leader sequence from pre-tRNA to produce the mature 5'-terminus. The sequence is that of RNA-free ribonuclease P from Methanococcus maripaludis (strain C7 / ATCC BAA-1331).